We begin with the raw amino-acid sequence, 487 residues long: Histamine H1 receptor (487 aa).

The Extracellular portion of the chain corresponds to 1 to 29 (MSLPNSSCLLEDKMCEGNKTTMASPQLMP). N-linked (GlcNAc...) asparagine glycans are attached at residues Asn-5 and Asn-18. The chain crosses the membrane as a helical span at residues 30-50 (LVVVLSTICLVTVGLNLLVLY). At 51 to 64 (AVRSERKLHTVGNL) the chain is on the cytoplasmic side. Residues 65–89 (YIVSLSVADLIVGAVVMPMNILYLL) form a helical membrane-spanning segment. At 90 to 97 (MSKWSLGR) the chain is on the extracellular side. Residues 98–123 (PLCLFWLSMDYVASTASIFSVFILCI) form a helical membrane-spanning segment. Residues Cys-100 and Cys-180 are joined by a disulfide bond. 2 residues coordinate histamine: Asp-107 and Thr-112. The segment at 107–112 (DYVAST) is important for agonist binding. Topologically, residues 124 to 144 (DRYRSVQQPLRYLKYRTKTRA) are cytoplasmic. Thr-140 and Thr-142 each carry phosphothreonine. A helical transmembrane segment spans residues 145–164 (SATILGAWFLSFLWVIPILG). Residues 165–188 (WNHFMQQTSVRREDKCETDFYDVT) are Extracellular-facing. Residues 189–211 (WFKVMTAIINFYLPTLLMLWFYA) traverse the membrane as a helical segment. Residue Asn-198 coordinates histamine. The Cytoplasmic segment spans residues 212 to 416 (KIYKAVRQHC…MNRERKAAKQ (205 aa)). Ser-230 carries the post-translational modification Phosphoserine. A compositionally biased stretch (basic and acidic residues) spans 238–261 (KLRPENPKGDAKKPGKESPWEVLK). The disordered stretch occupies residues 238–291 (KLRPENPKGDAKKPGKESPWEVLKRKPKDAGGGSVLKSPSQTPKEMKSPVVFSQ). Thr-279 is modified (phosphothreonine). Residues Ser-344 and Ser-347 each carry the phosphoserine modification. Positions 345-379 (EISEDQMLGDSQSFSRTDSDTTTETAPGKGKLRSG) are disordered. A compositionally biased stretch (polar residues) spans 353–369 (GDSQSFSRTDSDTTTET). 3 positions are modified to phosphoserine: Ser-380, Ser-396, and Ser-398. Residues 417-440 (LGFIMAAFILCWIPYFIFFMVIAF) traverse the membrane as a helical segment. Residues 424-428 (FILCW) form an important for agonist binding region. Tyr-431 contacts histamine. Cys-441 and Cys-444 are disulfide-bonded. Over 441-446 (CKNCCN) the chain is Extracellular. A helical membrane pass occupies residues 447 to 469 (EHLHMFTIWLGYINSTLNPLIYP). Over 470–487 (LCNENFKKTFKRILHIRS) the chain is Cytoplasmic.

Belongs to the G-protein coupled receptor 1 family. Post-translationally, phosphorylation at sites in the second and third cytoplasmic loops independently contribute to agonist-induced receptor down-regulation.

The protein localises to the cell membrane. In terms of biological role, G-protein-coupled receptor for histamine, a biogenic amine that functions as an immune modulator and a neurotransmitter. Through the H1 receptor, histamine mediates the contraction of smooth muscles and increases capillary permeability due to contraction of terminal venules. Also mediates neurotransmission in the central nervous system and thereby regulates circadian rhythms, emotional and locomotor activities as well as cognitive functions. This is Histamine H1 receptor from Homo sapiens (Human).